The sequence spans 78 residues: Large ribosomal subunit protein bL28B (78 aa).

It belongs to the bacterial ribosomal protein bL28 family.

The protein is Large ribosomal subunit protein bL28B (rpmB2) of Streptomyces coelicolor (strain ATCC BAA-471 / A3(2) / M145).